The chain runs to 381 residues: Adaptive-response sensory kinase SasA (381 aa).

Residues 154–367 (MVAHELRTPL…CFYFTVPVWD (214 aa)) form the Histidine kinase domain. His157 is modified (phosphohistidine; by autocatalysis).

As to quaternary structure, homooligomerizes. Interacts with KaiC. Participates in the KaiBC complex, whose core is composed of a KaiC homohexamer and 6 KaiB.

The enzyme catalyses ATP + protein L-histidine = ADP + protein N-phospho-L-histidine.. In terms of biological role, member of the two-component regulatory system SasA/RpaA involved in genome-wide circadian gene expression. One of several clock output pathways. Participates in the Kai clock protein complex, the main circadian regulator in cyanobacteria, via its interaction with KaiC. KaiC enhances the autophosphorylation activity of SasA, which then transfers its phosphate group to RpaA to activate it. In addition to its output function, recruits fold-shifted KaiB (KaiB(fs)) to KaiC to cooperatively form the KaiB(6):KaiC(6) complex (independent of SasA kinase activity). Required for robustness of the circadian rhythm of gene expression and is involved in clock output, also required for adaptation to light/dark cycles. This chain is Adaptive-response sensory kinase SasA, found in Prochlorococcus marinus (strain SARG / CCMP1375 / SS120).